Here is a 146-residue protein sequence, read N- to C-terminus: Flavodoxin (146 aa).

In terms of domain architecture, Flavodoxin-like spans 4-143; it reads SLIVYGSTTG…EIVSWGSGIA (140 aa).

Belongs to the flavodoxin family. The cofactor is FMN.

Functionally, low-potential electron donor to a number of redox enzymes. This is Flavodoxin from Maridesulfovibrio salexigens (strain ATCC 14822 / DSM 2638 / NCIMB 8403 / VKM B-1763) (Desulfovibrio salexigens).